The chain runs to 365 residues: Flagellar P-ring protein (365 aa).

Positions 1–20 are cleaved as a signal peptide; that stretch reads MKLPHFFVLAALVLSGAAHA.

This sequence belongs to the FlgI family. The basal body constitutes a major portion of the flagellar organelle and consists of four rings (L,P,S, and M) mounted on a central rod.

Its subcellular location is the periplasm. It localises to the bacterial flagellum basal body. Its function is as follows. Assembles around the rod to form the L-ring and probably protects the motor/basal body from shearing forces during rotation. The polypeptide is Flagellar P-ring protein (Thiobacillus denitrificans (strain ATCC 25259 / T1)).